Reading from the N-terminus, the 356-residue chain is UDP-N-acetylglucosamine--N-acetylmuramyl-(pentapeptide) pyrophosphoryl-undecaprenol N-acetylglucosamine transferase (356 aa).

Residues 14–16, Asn126, Arg162, Ser190, Ile244, and Gln289 contribute to the UDP-N-acetyl-alpha-D-glucosamine site; that span reads TGG.

It belongs to the glycosyltransferase 28 family. MurG subfamily.

Its subcellular location is the cell inner membrane. The catalysed reaction is di-trans,octa-cis-undecaprenyl diphospho-N-acetyl-alpha-D-muramoyl-L-alanyl-D-glutamyl-meso-2,6-diaminopimeloyl-D-alanyl-D-alanine + UDP-N-acetyl-alpha-D-glucosamine = di-trans,octa-cis-undecaprenyl diphospho-[N-acetyl-alpha-D-glucosaminyl-(1-&gt;4)]-N-acetyl-alpha-D-muramoyl-L-alanyl-D-glutamyl-meso-2,6-diaminopimeloyl-D-alanyl-D-alanine + UDP + H(+). It functions in the pathway cell wall biogenesis; peptidoglycan biosynthesis. Its function is as follows. Cell wall formation. Catalyzes the transfer of a GlcNAc subunit on undecaprenyl-pyrophosphoryl-MurNAc-pentapeptide (lipid intermediate I) to form undecaprenyl-pyrophosphoryl-MurNAc-(pentapeptide)GlcNAc (lipid intermediate II). The polypeptide is UDP-N-acetylglucosamine--N-acetylmuramyl-(pentapeptide) pyrophosphoryl-undecaprenol N-acetylglucosamine transferase (Cupriavidus pinatubonensis (strain JMP 134 / LMG 1197) (Cupriavidus necator (strain JMP 134))).